Reading from the N-terminus, the 346-residue chain is Calcium uniporter protein, mitochondrial (346 aa).

The Mitochondrial matrix segment spans residues 1–195; that stretch reads MTKGKLLTTP…ECDKAAHRGA (195 aa). The tract at residues 55–120 is disordered; the sequence is ELPPPDPQDS…GEGKDEGEFV (66 aa). 2 stretches are compositionally biased toward basic and acidic residues: residues 76–91 and 109–119; these read MEAK…KADT and REGEGKDEGEF. The helical transmembrane segment at 196–216 threads the bilayer; sequence QRIALAGCGGLIGYWYIVYRL. Residues 217-226 lie on the Mitochondrial intermembrane side of the membrane; sequence TFETDLGWDV. Positions 224 to 232 match the Selectivity filter motif; sequence WDVMEPVTY. The chain crosses the membrane as a helical span at residues 227 to 248; sequence MEPVTYLVGLSTLIGGYMWFLW. Glutamate 228 is a binding site for Ca(2+). Topologically, residues 249–346 are mitochondrial matrix; sequence HNREVSYRSA…KEGEEDDEDD (98 aa). Residues 306–346 form a disordered region; sequence WNETQDEGGDEKVTKALRDERKNNNGTKNKSKEGEEDDEDD. A compositionally biased stretch (basic and acidic residues) spans 315–328; the sequence is DEKVTKALRDERKN.

Belongs to the MCU (TC 1.A.77) family. In terms of assembly, homotetramer, assembles in a dimer or dimers configuration with two interfaces.

It is found in the mitochondrion inner membrane. It carries out the reaction Ca(2+)(in) = Ca(2+)(out). In terms of biological role, highly selective calcium channel localized to the inner mitochondrial membrane, which mediates calcium uptake into the mitochondrial matrix. Mitochondrial calcium homeostasis plays key roles in cellular physiology and regulates ATP production, cytoplasmic calcium signals and activation of cell death pathways. Sufficient to operate as a pore-forming channel without the need of calcium-sensor or auxiliary subunit. The polypeptide is Calcium uniporter protein, mitochondrial (Cyphellophora europaea (strain CBS 101466) (Phialophora europaea)).